A 106-amino-acid polypeptide reads, in one-letter code: Small ribosomal subunit protein uS10 (106 aa).

It belongs to the universal ribosomal protein uS10 family. In terms of assembly, part of the 30S ribosomal subunit.

In terms of biological role, involved in the binding of tRNA to the ribosomes. The sequence is that of Small ribosomal subunit protein uS10 from Parasynechococcus marenigrum (strain WH8102).